The primary structure comprises 184 residues: Gremlin-1 (184 aa).

Positions 1-24 (MSRTAYTVGALLLLLGTLLPAAEG) are cleaved as a signal peptide. The interval 24 to 77 (GKKKGSQGAIPPPDKAQHNDSEQTQSPQQPGSRNRGRGQGRGTAMPGEEVLESS) is disordered. A glycan (N-linked (GlcNAc...) asparagine) is linked at N42. Disulfide bonds link C94–C144, C108–C158, C118–C176, and C122–C178. The region spanning 94 to 184 (CKTQPLKQTI…QCRCISIDLD (91 aa)) is the CTCK domain.

This sequence belongs to the DAN family. Homodimer; can also form homooligomers. Interacts with BMP2; can form higher oligomers with BMP2. Interacts with SLIT1 and SLIT2 in a glycosylation-dependent manner. As to expression, highly expressed in small intestine, fetal brain and colon. Expression is restricted to intestinal subepithelial myofibroblasts (ISEMFs) at the crypt base. In subjects with HMPS1, by contrast, GREM1 is expressed, not only in basal ISEMFs, but also at very high levels in epithelial cells (predominantly colonocytes), with expression extending most of the way up the sides of the crypt. Weakly expressed in brain, ovary, prostate, pancreas and skeletal muscle. In brain found in the region localized around the internal capsule in the large subcortical nuclei, including caudate, putamen, substantia nigra, thalamus and subthalamus. Predominantly expressed in normal cells including neurons, astrocytes and fibroblasts.

It localises to the secreted. Cytokine that may play an important role during carcinogenesis and metanephric kidney organogenesis, as a BMP antagonist required for early limb outgrowth and patterning in maintaining the FGF4-SHH feedback loop. Down-regulates the BMP4 signaling in a dose-dependent manner. Antagonist of BMP2; inhibits BMP2-mediated differentiation of osteoblasts (in vitro). Acts as inhibitor of monocyte chemotaxis. Can inhibit the growth or viability of normal cells but not transformed cells when is overexpressed. This chain is Gremlin-1 (GREM1), found in Homo sapiens (Human).